Here is a 680-residue protein sequence, read N- to C-terminus: HEAT repeat-containing protein 3 (680 aa).

The span at 1–11 (MGKSRTKRFKR) shows a compositional bias: basic residues. The interval 1-39 (MGKSRTKRFKRPQFSPTGDCQAEAAAAANGTGGEEDDGP) is disordered. A Phosphoserine modification is found at Ser-15. Residues 18–29 (GDCQAEAAAAAN) show a composition bias toward low complexity. 2 HEAT repeats span residues 38–69 (GPAAELLEKLQHPSAEVRECACAGLARLVQQR) and 74–110 (GLARRDAVRRLGPLLLDPSLAVRETAAGALRNLSACG). The residue at position 144 (Ser-144) is a Phosphoserine. The residue at position 340 (Thr-340) is a Phosphothreonine.

It belongs to the nuclear import and ribosome assembly adapter family. Component of a hexameric 5S RNP precursor complex, composed of 5S RNA, RRS1, RPF2/BXDC1, RPL5, RPL11 and HEATR3; this complex acts as a precursor for ribosome assembly.

In terms of biological role, plays a role in ribosome biogenesis and in nuclear import of the 60S ribosomal protein L5/large ribosomal subunit protein uL18 (RPL5). Required for proper erythrocyte maturation. The chain is HEAT repeat-containing protein 3 (HEATR3) from Homo sapiens (Human).